The primary structure comprises 153 residues: Putative nuclear shuttle protein (153 aa).

This sequence belongs to the nanoviridae nuclear shuttle protein family.

It localises to the host nucleus. It is found in the host cytoplasm. Functionally, putative nuclear shuttle protein. This Faba bean necrotic yellows virus (isolate Syrian SV292-88) (FBNYV) protein is Putative nuclear shuttle protein (DNA-N).